Reading from the N-terminus, the 669-residue chain is DNA ligase (669 aa).

An NAD(+)-binding site is contributed by 35–39; it reads DFEYD. Positions 52 to 71 are disordered; that stretch reads YPEWDSPDSPTHRVGSDKTE. The segment covering 61–71 has biased composition (basic and acidic residues); sequence PTHRVGSDKTE. Residues 84–85 and glutamate 115 contribute to the NAD(+) site; that span reads SL. Catalysis depends on lysine 117, which acts as the N6-AMP-lysine intermediate. Residues arginine 138, glutamate 175, lysine 290, and lysine 314 each contribute to the NAD(+) site. The Zn(2+) site is built by cysteine 408, cysteine 411, cysteine 426, and cysteine 432. Residues 590 to 669 form the BRCT domain; sequence AVSNRLAGKT…EEEFLRLIEE (80 aa).

Belongs to the NAD-dependent DNA ligase family. LigA subfamily. Mg(2+) is required as a cofactor. The cofactor is Mn(2+).

The catalysed reaction is NAD(+) + (deoxyribonucleotide)n-3'-hydroxyl + 5'-phospho-(deoxyribonucleotide)m = (deoxyribonucleotide)n+m + AMP + beta-nicotinamide D-nucleotide.. Functionally, DNA ligase that catalyzes the formation of phosphodiester linkages between 5'-phosphoryl and 3'-hydroxyl groups in double-stranded DNA using NAD as a coenzyme and as the energy source for the reaction. It is essential for DNA replication and repair of damaged DNA. The sequence is that of DNA ligase from Porphyromonas gingivalis (strain ATCC BAA-308 / W83).